Here is a 165-residue protein sequence, read N- to C-terminus: Peptide methionine sulfoxide reductase MsrA (165 aa).

The active site involves Cys-11.

Belongs to the MsrA Met sulfoxide reductase family.

It catalyses the reaction L-methionyl-[protein] + [thioredoxin]-disulfide + H2O = L-methionyl-(S)-S-oxide-[protein] + [thioredoxin]-dithiol. The enzyme catalyses [thioredoxin]-disulfide + L-methionine + H2O = L-methionine (S)-S-oxide + [thioredoxin]-dithiol. In terms of biological role, has an important function as a repair enzyme for proteins that have been inactivated by oxidation. Catalyzes the reversible oxidation-reduction of methionine sulfoxide in proteins to methionine. The polypeptide is Peptide methionine sulfoxide reductase MsrA (Ureaplasma urealyticum serovar 10 (strain ATCC 33699 / Western)).